Consider the following 266-residue polypeptide: Putative carbamate hydrolase RutD (266 aa).

The 114-residue stretch at 15-128 folds into the AB hydrolase-1 domain; sequence AVLLSSGLGG…NAHSARCFDA (114 aa).

Belongs to the AB hydrolase superfamily. Hydrolase RutD family.

The enzyme catalyses carbamate + 2 H(+) = NH4(+) + CO2. Functionally, involved in pyrimidine catabolism. May facilitate the hydrolysis of carbamate, a reaction that can also occur spontaneously. The polypeptide is Putative carbamate hydrolase RutD (Variovorax paradoxus (strain S110)).